The chain runs to 220 residues: Adapter protein MecA (220 aa).

Belongs to the MecA family. Homodimer.

Functionally, enables the recognition and targeting of unfolded and aggregated proteins to the ClpC protease or to other proteins involved in proteolysis. The polypeptide is Adapter protein MecA (Macrococcus caseolyticus (strain JCSC5402) (Macrococcoides caseolyticum)).